Consider the following 357-residue polypeptide: Enoyl-[acyl-carrier-protein] reductase, mitochondrial (357 aa).

A mitochondrion-targeting transit peptide spans 1 to 19 (MLRRGFLSRINAAQWSRQM). The Enoyl reductase (ER) domain maps to 36 to 352 (EVLQLVEDKL…FKGFTGKKYI (317 aa)). The active-site Proton donor is the Y74. NADP(+)-binding positions include N147, 173–176 (NSAV), 196–198 (RDR), 264–267 (YGGM), 289–291 (FWM), K349, and K350.

It belongs to the zinc-containing alcohol dehydrogenase family. Quinone oxidoreductase subfamily. In terms of assembly, homodimer. In terms of tissue distribution, expressed in the central nervous system.

It localises to the mitochondrion. It carries out the reaction a 2,3-saturated acyl-[ACP] + NADP(+) = a (2E)-enoyl-[ACP] + NADPH + H(+). In terms of biological role, catalyzes the NADPH-dependent reduction of trans-2-enoyl thioesters in mitochondrial fatty acid synthesis (fatty acid synthesis type II). Fatty acid chain elongation in mitochondria uses acyl carrier protein (ACP) as an acyl group carrier, but the enzyme accepts both ACP and CoA thioesters as substrates in vitro. Involved in iron homeostasis; affecting Fe-S cluster assembly and ceramide metabolism. Required for proper morphology and bioenergetic functions of mitochondria. Required for maintenance of neurons, including photoreceptor neurons. The protein is Enoyl-[acyl-carrier-protein] reductase, mitochondrial of Drosophila melanogaster (Fruit fly).